Here is a 577-residue protein sequence, read N- to C-terminus: Arginine--tRNA ligase (577 aa).

The 'HIGH' region signature appears at 122–132; that stretch reads PNVAKEMHVGH.

It belongs to the class-I aminoacyl-tRNA synthetase family. Monomer.

It is found in the cytoplasm. The enzyme catalyses tRNA(Arg) + L-arginine + ATP = L-arginyl-tRNA(Arg) + AMP + diphosphate. In Escherichia coli O1:K1 / APEC, this protein is Arginine--tRNA ligase.